Reading from the N-terminus, the 378-residue chain is Phosphoserine aminotransferase (378 aa).

Residue Arg-53 participates in L-glutamate binding. Positions 117, 167, 190, and 213 each coordinate pyridoxal 5'-phosphate. Lys-214 is modified (N6-(pyridoxal phosphate)lysine). 255–256 (NT) serves as a coordination point for pyridoxal 5'-phosphate.

This sequence belongs to the class-V pyridoxal-phosphate-dependent aminotransferase family. SerC subfamily. As to quaternary structure, homodimer. Requires pyridoxal 5'-phosphate as cofactor.

The protein resides in the cytoplasm. The catalysed reaction is O-phospho-L-serine + 2-oxoglutarate = 3-phosphooxypyruvate + L-glutamate. The enzyme catalyses 4-(phosphooxy)-L-threonine + 2-oxoglutarate = (R)-3-hydroxy-2-oxo-4-phosphooxybutanoate + L-glutamate. Its pathway is amino-acid biosynthesis; L-serine biosynthesis; L-serine from 3-phospho-D-glycerate: step 2/3. It functions in the pathway cofactor biosynthesis; pyridoxine 5'-phosphate biosynthesis; pyridoxine 5'-phosphate from D-erythrose 4-phosphate: step 3/5. In terms of biological role, catalyzes the reversible conversion of 3-phosphohydroxypyruvate to phosphoserine and of 3-hydroxy-2-oxo-4-phosphonooxybutanoate to phosphohydroxythreonine. The chain is Phosphoserine aminotransferase from Ralstonia pickettii (strain 12J).